The following is a 280-amino-acid chain: Polyamine aminopropyltransferase 2 (280 aa).

In terms of domain architecture, PABS spans 2 to 237 (ELWLDEALEL…GIIGFTYCSK (236 aa)). Residue Gln33 participates in S-methyl-5'-thioadenosine binding. His64 and Asp88 together coordinate spermidine. Residues Glu108 and 139–140 (DG) each bind S-methyl-5'-thioadenosine. The Proton acceptor role is filled by Asp157. Position 157-160 (157-160 (DSSD)) interacts with spermidine. Pro164 is an S-methyl-5'-thioadenosine binding site.

Belongs to the spermidine/spermine synthase family. As to quaternary structure, homodimer or homotetramer.

The protein localises to the cytoplasm. The enzyme catalyses S-adenosyl 3-(methylsulfanyl)propylamine + putrescine = S-methyl-5'-thioadenosine + spermidine + H(+). The protein operates within amine and polyamine biosynthesis; spermidine biosynthesis; spermidine from putrescine: step 1/1. Its function is as follows. Catalyzes the irreversible transfer of a propylamine group from the amino donor S-adenosylmethioninamine (decarboxy-AdoMet) to putrescine (1,4-diaminobutane) to yield spermidine. In Leptospira interrogans serogroup Icterohaemorrhagiae serovar Lai (strain 56601), this protein is Polyamine aminopropyltransferase 2.